We begin with the raw amino-acid sequence, 384 residues long: Putative glutamate--cysteine ligase 2 (384 aa).

Belongs to the glutamate--cysteine ligase type 2 family. YbdK subfamily.

It catalyses the reaction L-cysteine + L-glutamate + ATP = gamma-L-glutamyl-L-cysteine + ADP + phosphate + H(+). In terms of biological role, ATP-dependent carboxylate-amine ligase which exhibits weak glutamate--cysteine ligase activity. The protein is Putative glutamate--cysteine ligase 2 of Dechloromonas aromatica (strain RCB).